The primary structure comprises 645 residues: Acetyl-coenzyme A synthetase (645 aa).

Residues 190 to 193 and threonine 308 each bind CoA; that span reads RGGR. Residues 384 to 386, 408 to 413, aspartate 497, and arginine 512 contribute to the ATP site; these read GEP and DTWWQT. Serine 520 contributes to the CoA binding site. Arginine 523 contributes to the ATP binding site. Mg(2+) contacts are provided by valine 534, histidine 536, and valine 539. Lysine 606 carries the post-translational modification N6-acetyllysine.

It belongs to the ATP-dependent AMP-binding enzyme family. The cofactor is Mg(2+). In terms of processing, acetylated. Deacetylation by the SIR2-homolog deacetylase activates the enzyme.

The enzyme catalyses acetate + ATP + CoA = acetyl-CoA + AMP + diphosphate. Catalyzes the conversion of acetate into acetyl-CoA (AcCoA), an essential intermediate at the junction of anabolic and catabolic pathways. AcsA undergoes a two-step reaction. In the first half reaction, AcsA combines acetate with ATP to form acetyl-adenylate (AcAMP) intermediate. In the second half reaction, it can then transfer the acetyl group from AcAMP to the sulfhydryl group of CoA, forming the product AcCoA. This Halorhodospira halophila (strain DSM 244 / SL1) (Ectothiorhodospira halophila (strain DSM 244 / SL1)) protein is Acetyl-coenzyme A synthetase.